The chain runs to 330 residues: Succinoglycan biosynthesis protein ExoA (330 aa).

The next 3 membrane-spanning stretches (helical) occupy residues 116–136 (ALATGADSVVVAMQTVGFSTF), 260–280 (IAFGALLAIVNWMAVVPVGVW), and 299–319 (YGPLAAVAAMVMHLAWSAGFW).

The protein belongs to the glycosyltransferase 2 family.

The protein resides in the cell membrane. It functions in the pathway glycan metabolism; exopolysaccharide biosynthesis. Glycosyltransferase required for the synthesis of succinoglycan (EPS I). Needed for the addition of the second sugar (glucose). Catalyzes the formation of a beta-1,3 linkage with the galactose lipid carrier. The protein is Succinoglycan biosynthesis protein ExoA (exoA) of Rhizobium meliloti (strain 1021) (Ensifer meliloti).